A 344-amino-acid chain; its full sequence is Ferrochelatase (344 aa).

Residues His-214 and Glu-295 each coordinate Fe cation.

The protein belongs to the ferrochelatase family.

The protein localises to the cytoplasm. The catalysed reaction is heme b + 2 H(+) = protoporphyrin IX + Fe(2+). The protein operates within porphyrin-containing compound metabolism; protoheme biosynthesis; protoheme from protoporphyrin-IX: step 1/1. Its function is as follows. Catalyzes the ferrous insertion into protoporphyrin IX. This chain is Ferrochelatase, found in Allorhizobium ampelinum (strain ATCC BAA-846 / DSM 112012 / S4) (Agrobacterium vitis (strain S4)).